Consider the following 312-residue polypeptide: Cytoplasmic dynein intermediate light chain DYN3 (312 aa).

Belongs to the dynein light intermediate chain DYN3 family. The dynein complex consists of at least two heavy chains and a number of intermediate and light chains. Interacts with DYN1.

It localises to the cytoplasm. It is found in the cytoskeleton. Functionally, component of the cytoplasmic dynein which acts as a motor for the intracellular retrograde motility of vesicles and organelles along microtubules. May play an important role in the proper orientation of the mitotic spindle into the budding daughter cell yeast. Probably required for normal progression of the cell cycle. In Saccharomyces cerevisiae (strain ATCC 204508 / S288c) (Baker's yeast), this protein is Cytoplasmic dynein intermediate light chain DYN3 (DYN3).